A 432-amino-acid polypeptide reads, in one-letter code: 3-phosphoshikimate 1-carboxyvinyltransferase (432 aa).

3-phosphoshikimate is bound by residues Lys22, Ser23, and Arg27. Lys22 is a binding site for phosphoenolpyruvate. Residues Gly96 and Arg127 each coordinate phosphoenolpyruvate. Residues Ser173, Ser174, Gln175, Ser201, Asp316, Asn339, and Lys343 each contribute to the 3-phosphoshikimate site. Residue Gln175 participates in phosphoenolpyruvate binding. The Proton acceptor role is filled by Asp316. Residues Arg347, Arg391, and Lys416 each coordinate phosphoenolpyruvate.

This sequence belongs to the EPSP synthase family. Monomer.

It localises to the cytoplasm. It catalyses the reaction 3-phosphoshikimate + phosphoenolpyruvate = 5-O-(1-carboxyvinyl)-3-phosphoshikimate + phosphate. It participates in metabolic intermediate biosynthesis; chorismate biosynthesis; chorismate from D-erythrose 4-phosphate and phosphoenolpyruvate: step 6/7. In terms of biological role, catalyzes the transfer of the enolpyruvyl moiety of phosphoenolpyruvate (PEP) to the 5-hydroxyl of shikimate-3-phosphate (S3P) to produce enolpyruvyl shikimate-3-phosphate and inorganic phosphate. The polypeptide is 3-phosphoshikimate 1-carboxyvinyltransferase (Actinobacillus pleuropneumoniae serotype 5b (strain L20)).